The following is a 256-amino-acid chain: Eukaryotic translation initiation factor 3 subunit J (256 aa).

Residues Met-1–Val-67 form a sufficient for interaction with EIF3B region. Residues Met-1–Leu-106 are disordered. 3 positions are modified to phosphoserine: Ser-9, Ser-11, and Ser-18. Positions Glu-38–Lys-57 are enriched in acidic residues. A compositionally biased stretch (basic and acidic residues) spans Lys-58–Lys-104. Residues Lys-68–Thr-133 are a coiled coil. A Glycyl lysine isopeptide (Lys-Gly) (interchain with G-Cter in SUMO2) cross-link involves residue Lys-104. Thr-107 carries the post-translational modification Phosphothreonine. A Phosphoserine modification is found at Ser-125. Positions Gln-214–Gly-243 are disordered. Residues Tyr-241–Met-256 form a promotes stable association with the 40S ribosome region. A Phosphotyrosine modification is found at Tyr-252.

Belongs to the eIF-3 subunit J family. Component of the eukaryotic translation initiation factor 3 (eIF-3) complex, which is composed of 13 subunits: EIF3A, EIF3B, EIF3C, EIF3D, EIF3E, EIF3F, EIF3G, EIF3H, EIF3I, EIF3J, EIF3K, EIF3L and EIF3M. The eIF-3 complex appears to include 3 stable modules: module A is composed of EIF3A, EIF3B, EIF3G and EIF3I; module B is composed of EIF3F, EIF3H, and EIF3M; and module C is composed of EIF3C, EIF3D, EIF3E, EIF3K and EIF3L. EIF3C of module C binds EIF3B of module A and EIF3H of module B, thereby linking the three modules. EIF3J is a labile subunit that binds to the eIF-3 complex via EIF3B. The eIF-3 complex interacts with RPS6KB1 under conditions of nutrient depletion. Mitogenic stimulation leads to binding and activation of a complex composed of MTOR and RPTOR, leading to phosphorylation and release of RPS6KB1 and binding of EIF4B to eIF-3. In terms of processing, phosphorylated. Phosphorylation is enhanced upon serum stimulation.

It localises to the cytoplasm. In terms of biological role, component of the eukaryotic translation initiation factor 3 (eIF-3) complex, which is required for several steps in the initiation of protein synthesis. The eIF-3 complex associates with the 40S ribosome and facilitates the recruitment of eIF-1, eIF-1A, eIF-2:GTP:methionyl-tRNAi and eIF-5 to form the 43S pre-initiation complex (43S PIC). The eIF-3 complex stimulates mRNA recruitment to the 43S PIC and scanning of the mRNA for AUG recognition. The eIF-3 complex is also required for disassembly and recycling of post-termination ribosomal complexes and subsequently prevents premature joining of the 40S and 60S ribosomal subunits prior to initiation. The eIF-3 complex specifically targets and initiates translation of a subset of mRNAs involved in cell proliferation, including cell cycling, differentiation and apoptosis, and uses different modes of RNA stem-loop binding to exert either translational activation or repression. This subunit binds directly within the mRNA entry channel of the 40S ribosome to the aminoacyl (A) site. It may regulate the interaction between the 43S PIC and mRNA. The polypeptide is Eukaryotic translation initiation factor 3 subunit J (Bos taurus (Bovine)).